We begin with the raw amino-acid sequence, 264 residues long: 3-methyl-2-oxobutanoate hydroxymethyltransferase (264 aa).

D45 and D84 together coordinate Mg(2+). Residues D45–S46, D84, and K112 contribute to the 3-methyl-2-oxobutanoate site. A Mg(2+)-binding site is contributed by E114. The active-site Proton acceptor is E181.

This sequence belongs to the PanB family. In terms of assembly, homodecamer; pentamer of dimers. Requires Mg(2+) as cofactor.

Its subcellular location is the cytoplasm. The catalysed reaction is 3-methyl-2-oxobutanoate + (6R)-5,10-methylene-5,6,7,8-tetrahydrofolate + H2O = 2-dehydropantoate + (6S)-5,6,7,8-tetrahydrofolate. Its pathway is cofactor biosynthesis; (R)-pantothenate biosynthesis; (R)-pantoate from 3-methyl-2-oxobutanoate: step 1/2. Its function is as follows. Catalyzes the reversible reaction in which hydroxymethyl group from 5,10-methylenetetrahydrofolate is transferred onto alpha-ketoisovalerate to form ketopantoate. The sequence is that of 3-methyl-2-oxobutanoate hydroxymethyltransferase from Aeromonas hydrophila subsp. hydrophila (strain ATCC 7966 / DSM 30187 / BCRC 13018 / CCUG 14551 / JCM 1027 / KCTC 2358 / NCIMB 9240 / NCTC 8049).